A 67-amino-acid chain; its full sequence is Beta-defensin 110 (67 aa).

Positions 1–19 are cleaved as a signal peptide; the sequence is MKIQLFFFILLFWVTILPA. 3 cysteine pairs are disulfide-bonded: Cys-35/Cys-63, Cys-42/Cys-56, and Cys-46/Cys-64.

The protein belongs to the beta-defensin family.

It localises to the secreted. Its function is as follows. Has antibacterial activity. In Pan troglodytes (Chimpanzee), this protein is Beta-defensin 110 (DEFB110).